Consider the following 252-residue polypeptide: MIVFLLKRILLLYLIFFVPKSFSENLPFFKIKSYSEKKEFFQNDNEKVGYSLGVSLGNYVNESFERQKKMGINLDKYNILLGVQDAISGNLKLSNEEISTILQKLEKNLKNAAKIEFEKSEKENLIQGKLYMKKFSEMKGVSKTSSGLLYIIDKLGEGEEIKTKNAEITVHYKGSLINGTEFDSSYKRGKPITLMLKDVILGWQEGLKYIKKGGKIKLIIPPNLGYGSNRINEIPANSILIFDIELLDIKNI.

The region spanning 165–252 is the PPIase FKBP-type domain; it reads NAEITVHYKG…DIELLDIKNI (88 aa).

Belongs to the FKBP-type PPIase family.

The enzyme catalyses [protein]-peptidylproline (omega=180) = [protein]-peptidylproline (omega=0). In terms of biological role, PPIases accelerate the folding of proteins. It catalyzes the cis-trans isomerization of proline imidic peptide bonds in oligopeptides. This is FKBP-type peptidyl-prolyl cis-trans isomerase FkpA (fkpA) from Buchnera aphidicola subsp. Schizaphis graminum (strain Sg).